Here is an 81-residue protein sequence, read N- to C-terminus: Photosystem I iron-sulfur center (81 aa).

2 4Fe-4S ferredoxin-type domains span residues 2 to 31 (AHSV…MIPW) and 39 to 68 (IASA…VRVY). Residues Cys11, Cys14, Cys17, Cys21, Cys48, Cys51, Cys54, and Cys58 each contribute to the [4Fe-4S] cluster site.

In terms of assembly, the eukaryotic PSI reaction center is composed of at least 11 subunits. It depends on [4Fe-4S] cluster as a cofactor.

The protein localises to the plastid. It localises to the chloroplast thylakoid membrane. It catalyses the reaction reduced [plastocyanin] + hnu + oxidized [2Fe-2S]-[ferredoxin] = oxidized [plastocyanin] + reduced [2Fe-2S]-[ferredoxin]. Apoprotein for the two 4Fe-4S centers FA and FB of photosystem I (PSI); essential for photochemical activity. FB is the terminal electron acceptor of PSI, donating electrons to ferredoxin. The C-terminus interacts with PsaA/B/D and helps assemble the protein into the PSI complex. Required for binding of PsaD and PsaE to PSI. PSI is a plastocyanin-ferredoxin oxidoreductase, converting photonic excitation into a charge separation, which transfers an electron from the donor P700 chlorophyll pair to the spectroscopically characterized acceptors A0, A1, FX, FA and FB in turn. The protein is Photosystem I iron-sulfur center of Staurastrum punctulatum (Green alga).